A 199-amino-acid chain; its full sequence is Golgi to ER traffic protein 1 (199 aa).

Residues 1–11 (MLLPDLHPYTI) are Lumenal-facing. Residues 12 to 31 (LLSIFIVLLLKQLVASIGKS) form a helical membrane-spanning segment. Over 32-115 (TIKEFVWLVY…SIDKVSNALL (84 aa)) the chain is Cytoplasmic. Positions 66–116 (EKRAISAQDEYAKWTKLNRQADKLSAELQKLNQEIQQQKASIDKVSNALLL) form a coiled coil. Residues 116-136 (LVLTTLPIWVARVLYRNTHLF) form a helical membrane-spanning segment. Residues 137–160 (YIRQGIFPKYVEWVLALPFLPNGA) are Lumenal-facing. Residues 161–177 (VGLTIWMFAVNSVVSNF) traverse the membrane as a helical segment. The Cytoplasmic portion of the chain corresponds to 178 to 199 (AFLVSFPFAKKVSKPVRDTKIE).

It belongs to the WRB/GET1 family. In terms of assembly, component of the Golgi to ER traffic (GET) complex, which is composed of GET1, GET2 and GET3. Within the complex, GET1 and GET2 form a heterotetramer which is stabilized by phosphatidylinositol binding and which binds to the GET3 homodimer.

It localises to the endoplasmic reticulum membrane. The protein resides in the golgi apparatus membrane. Its function is as follows. Required for the post-translational delivery of tail-anchored (TA) proteins to the endoplasmic reticulum. Together with GET2, acts as a membrane receptor for soluble GET3, which recognizes and selectively binds the transmembrane domain of TA proteins in the cytosol. The GET complex cooperates with the HDEL receptor ERD2 to mediate the ATP-dependent retrieval of resident ER proteins that contain a C-terminal H-D-E-L retention signal from the Golgi to the ER. This Candida dubliniensis (strain CD36 / ATCC MYA-646 / CBS 7987 / NCPF 3949 / NRRL Y-17841) (Yeast) protein is Golgi to ER traffic protein 1.